Reading from the N-terminus, the 404-residue chain is ATP phosphoribosyltransferase regulatory subunit (404 aa).

The protein belongs to the class-II aminoacyl-tRNA synthetase family. HisZ subfamily. As to quaternary structure, heteromultimer composed of HisG and HisZ subunits.

Its subcellular location is the cytoplasm. Its pathway is amino-acid biosynthesis; L-histidine biosynthesis; L-histidine from 5-phospho-alpha-D-ribose 1-diphosphate: step 1/9. In terms of biological role, required for the first step of histidine biosynthesis. May allow the feedback regulation of ATP phosphoribosyltransferase activity by histidine. This is ATP phosphoribosyltransferase regulatory subunit from Trichormus variabilis (strain ATCC 29413 / PCC 7937) (Anabaena variabilis).